Consider the following 176-residue polypeptide: MSDKPASMYRTIDKPSYTRREYITGIPGSKIAQHNMGDLSAEPDDYPVQISLRVEEELQIRHGSLESSRLSANRHLIKELGEGNYKMTLRKFPHQVIRENKQATGAGADRVSDGMRQAFGKPVGTAARLNKDDIVFTAYCDVEQASVVKEAFRRAYNKLSPPCRITVDRGEELLVS.

Belongs to the universal ribosomal protein uL16 family.

In Halorubrum lacusprofundi (strain ATCC 49239 / DSM 5036 / JCM 8891 / ACAM 34), this protein is Large ribosomal subunit protein uL16.